A 117-amino-acid chain; its full sequence is MIKTYNGSKLGIASSHRKALLRNLAAALFLYEKITTTLSKAKELVSYSEKLVTKAKKADLSAMRAINGEINSKAAVKKIFDILVPRYKERSGGYTQILKVGTRRGDSADVAIVKLVT.

Belongs to the bacterial ribosomal protein bL17 family. As to quaternary structure, part of the 50S ribosomal subunit. Contacts protein L32.

The protein is Large ribosomal subunit protein bL17 of Endomicrobium trichonymphae.